The primary structure comprises 581 residues: 2-succinyl-5-enolpyruvyl-6-hydroxy-3-cyclohexene-1-carboxylate synthase (581 aa).

It belongs to the TPP enzyme family. MenD subfamily. In terms of assembly, homodimer. Mg(2+) is required as a cofactor. Requires Mn(2+) as cofactor. It depends on thiamine diphosphate as a cofactor.

It catalyses the reaction isochorismate + 2-oxoglutarate + H(+) = 5-enolpyruvoyl-6-hydroxy-2-succinyl-cyclohex-3-ene-1-carboxylate + CO2. It participates in quinol/quinone metabolism; 1,4-dihydroxy-2-naphthoate biosynthesis; 1,4-dihydroxy-2-naphthoate from chorismate: step 2/7. It functions in the pathway quinol/quinone metabolism; menaquinone biosynthesis. Catalyzes the thiamine diphosphate-dependent decarboxylation of 2-oxoglutarate and the subsequent addition of the resulting succinic semialdehyde-thiamine pyrophosphate anion to isochorismate to yield 2-succinyl-5-enolpyruvyl-6-hydroxy-3-cyclohexene-1-carboxylate (SEPHCHC). The sequence is that of 2-succinyl-5-enolpyruvyl-6-hydroxy-3-cyclohexene-1-carboxylate synthase from Psychromonas ingrahamii (strain DSM 17664 / CCUG 51855 / 37).